We begin with the raw amino-acid sequence, 159 residues long: Ribosomal RNA large subunit methyltransferase H (159 aa).

S-adenosyl-L-methionine is bound by residues leucine 76, glycine 108, and 127 to 132 (FSKMTF).

Belongs to the RNA methyltransferase RlmH family. As to quaternary structure, homodimer.

The protein localises to the cytoplasm. The enzyme catalyses pseudouridine(1915) in 23S rRNA + S-adenosyl-L-methionine = N(3)-methylpseudouridine(1915) in 23S rRNA + S-adenosyl-L-homocysteine + H(+). Its function is as follows. Specifically methylates the pseudouridine at position 1915 (m3Psi1915) in 23S rRNA. The sequence is that of Ribosomal RNA large subunit methyltransferase H from Clostridium botulinum (strain ATCC 19397 / Type A).